The sequence spans 393 residues: NAD(P)H-quinone oxidoreductase subunit H, chloroplastic (393 aa).

This sequence belongs to the complex I 49 kDa subunit family. As to quaternary structure, NDH is composed of at least 16 different subunits, 5 of which are encoded in the nucleus.

Its subcellular location is the plastid. It is found in the chloroplast thylakoid membrane. The enzyme catalyses a plastoquinone + NADH + (n+1) H(+)(in) = a plastoquinol + NAD(+) + n H(+)(out). It carries out the reaction a plastoquinone + NADPH + (n+1) H(+)(in) = a plastoquinol + NADP(+) + n H(+)(out). Functionally, NDH shuttles electrons from NAD(P)H:plastoquinone, via FMN and iron-sulfur (Fe-S) centers, to quinones in the photosynthetic chain and possibly in a chloroplast respiratory chain. The immediate electron acceptor for the enzyme in this species is believed to be plastoquinone. Couples the redox reaction to proton translocation, and thus conserves the redox energy in a proton gradient. The sequence is that of NAD(P)H-quinone oxidoreductase subunit H, chloroplastic from Sorghum bicolor (Sorghum).